The sequence spans 348 residues: Dihydroorotase (348 aa).

Zn(2+) contacts are provided by His-14 and His-16. Residues His-16–Arg-18 and Asn-42 contribute to the substrate site. The Zn(2+) site is built by Lys-100, His-137, and His-175. Lys-100 is subject to N6-carboxylysine. A substrate-binding site is contributed by His-137. Leu-220 is a binding site for substrate. Asp-248 serves as a coordination point for Zn(2+). The active site involves Asp-248. Substrate contacts are provided by His-252 and Ala-264.

It belongs to the metallo-dependent hydrolases superfamily. DHOase family. Class II DHOase subfamily. As to quaternary structure, homodimer. The cofactor is Zn(2+).

The catalysed reaction is (S)-dihydroorotate + H2O = N-carbamoyl-L-aspartate + H(+). The protein operates within pyrimidine metabolism; UMP biosynthesis via de novo pathway; (S)-dihydroorotate from bicarbonate: step 3/3. Functionally, catalyzes the reversible cyclization of carbamoyl aspartate to dihydroorotate. This is Dihydroorotase from Pseudomonas paraeruginosa (strain DSM 24068 / PA7) (Pseudomonas aeruginosa (strain PA7)).